A 138-amino-acid chain; its full sequence is Microneme antigen L2 (138 aa).

PAN domains are found at residues 9-78 and 82-138; these read CFAH…PRSC and CSDA…SKRA. Cystine bridges form between cysteine 9–cysteine 78, cysteine 34–cysteine 56, cysteine 38–cysteine 44, cysteine 82–cysteine 86, cysteine 107–cysteine 127, and cysteine 111–cysteine 117. Serine 18 provides a ligand contact to a carbohydrate. A carbohydrate contacts are provided by lysine 59, tyrosine 66, and aspartate 71.

In terms of assembly, homodimer or heterodimer. Post-translationally, contains six disulfide bonds.

It is found in the cytoplasmic vesicle. Its subcellular location is the secretory vesicle. The protein resides in the microneme. Functionally, galactose-binding lectin. Plays a role in adhesion to the host cell. Has a potential role in invasion of host cells. This is Microneme antigen L2 from Sarcocystis muris.